The sequence spans 242 residues: RNA transcription, translation and transport factor protein (242 aa).

It belongs to the RTRAF family. In terms of assembly, homodimer. Component of a tRNA-splicing ligase complex.

The protein localises to the nucleus. Its subcellular location is the cytoplasm. It is found in the cytosol. The protein resides in the perinuclear region. It localises to the cytoskeleton. The protein localises to the microtubule organizing center. Its subcellular location is the centrosome. Functionally, RNA-binding protein involved in modulation of mRNA transcription by Polymerase II. Component of the tRNA-splicing ligase complex. This is RNA transcription, translation and transport factor protein from Danio rerio (Zebrafish).